The sequence spans 327 residues: uncharacterized protein (327 aa).

Residues 32-105 (VRLDKWLAEQ…IPLDILYEDE (74 aa)) form the S4 RNA-binding domain. Asp156 is a catalytic residue.

The protein belongs to the pseudouridine synthase RluA family.

It catalyses the reaction a uridine in RNA = a pseudouridine in RNA. This is an uncharacterized protein from Synechocystis sp. (strain ATCC 27184 / PCC 6803 / Kazusa).